The following is a 91-amino-acid chain: Small ribosomal subunit protein uS15c (91 aa).

Belongs to the universal ribosomal protein uS15 family. In terms of assembly, part of the 30S ribosomal subunit.

The protein localises to the plastid. It is found in the chloroplast. The protein is Small ribosomal subunit protein uS15c (rps15) of Eucalyptus globulus subsp. globulus (Tasmanian blue gum).